Reading from the N-terminus, the 248-residue chain is Ribonuclease PH (248 aa).

Phosphate-binding positions include Arg86 and 124-126 (GTR).

This sequence belongs to the RNase PH family. In terms of assembly, homohexameric ring arranged as a trimer of dimers.

It carries out the reaction tRNA(n+1) + phosphate = tRNA(n) + a ribonucleoside 5'-diphosphate. Functionally, phosphorolytic 3'-5' exoribonuclease that plays an important role in tRNA 3'-end maturation. Removes nucleotide residues following the 3'-CCA terminus of tRNAs; can also add nucleotides to the ends of RNA molecules by using nucleoside diphosphates as substrates, but this may not be physiologically important. Probably plays a role in initiation of 16S rRNA degradation (leading to ribosome degradation) during starvation. This chain is Ribonuclease PH, found in Clostridium kluyveri (strain NBRC 12016).